Consider the following 392-residue polypeptide: Imidazolonepropionase (392 aa).

Positions 69 and 71 each coordinate Fe(3+). 2 residues coordinate Zn(2+): His-69 and His-71. 3 residues coordinate 4-imidazolone-5-propanoate: Arg-78, Tyr-136, and His-163. Residue Tyr-136 participates in N-formimidoyl-L-glutamate binding. His-226 provides a ligand contact to Fe(3+). His-226 lines the Zn(2+) pocket. Gln-229 contacts 4-imidazolone-5-propanoate. A Fe(3+)-binding site is contributed by Asp-302. Asp-302 lines the Zn(2+) pocket. Residues Asn-304 and Gly-306 each contribute to the N-formimidoyl-L-glutamate site. Ser-307 provides a ligand contact to 4-imidazolone-5-propanoate.

The protein belongs to the metallo-dependent hydrolases superfamily. HutI family. Requires Zn(2+) as cofactor. The cofactor is Fe(3+).

The protein resides in the cytoplasm. It carries out the reaction 4-imidazolone-5-propanoate + H2O = N-formimidoyl-L-glutamate. The protein operates within amino-acid degradation; L-histidine degradation into L-glutamate; N-formimidoyl-L-glutamate from L-histidine: step 3/3. In terms of biological role, catalyzes the hydrolytic cleavage of the carbon-nitrogen bond in imidazolone-5-propanoate to yield N-formimidoyl-L-glutamate. It is the third step in the universal histidine degradation pathway. The protein is Imidazolonepropionase of Salinispora arenicola (strain CNS-205).